Consider the following 145-residue polypeptide: LIM domain only protein 3 (145 aa).

LIM zinc-binding domains are found at residues 11-73 (KGCA…LFGV) and 75-137 (GNCA…GLMK).

This chain is LIM domain only protein 3 (LMO3), found in Bos taurus (Bovine).